A 525-amino-acid chain; its full sequence is Apolipoprotein N-acyltransferase 2 (525 aa).

A run of 6 helical transmembrane segments spans residues 25–45 (ILNFGSAIAGFSGLVLVYYAL), 56–76 (FLYGFFVSFVHLMSSFWLAFF), 81–101 (IFTLGASTLAYFFIAMPFGFL), 115–135 (FFFAAIWLLWEFAKSTGFLAY), 153–173 (FVDITGVWGLSFIVPLIAACL), and 200–220 (LIFTAFLVLIINIYGITILSI). The 259-residue stretch at 228–486 (LNTVIVQQNT…AESVYTEVPV (259 aa)) folds into the CN hydrolase domain. The active-site Proton acceptor is Glu274. Lys339 is an active-site residue. Cys397 (nucleophile) is an active-site residue. The helical transmembrane segment at 495-515 (ASYKDWLPIMMFLILIFNIFL) threads the bilayer.

The protein belongs to the CN hydrolase family. Apolipoprotein N-acyltransferase subfamily.

It is found in the cell inner membrane. It carries out the reaction N-terminal S-1,2-diacyl-sn-glyceryl-L-cysteinyl-[lipoprotein] + a glycerophospholipid = N-acyl-S-1,2-diacyl-sn-glyceryl-L-cysteinyl-[lipoprotein] + a 2-acyl-sn-glycero-3-phospholipid + H(+). It functions in the pathway protein modification; lipoprotein biosynthesis (N-acyl transfer). Functionally, catalyzes the phospholipid dependent N-acylation of the N-terminal cysteine of apolipoprotein, the last step in lipoprotein maturation. The polypeptide is Apolipoprotein N-acyltransferase 2 (Treponema denticola (strain ATCC 35405 / DSM 14222 / CIP 103919 / JCM 8153 / KCTC 15104)).